The sequence spans 217 residues: Flagellin B2 (217 aa).

Residues 1–12 (MKVFEFLKGKRG) constitute a propeptide that is removed on maturation.

This sequence belongs to the archaeal flagellin family.

The protein localises to the archaeal flagellum. In terms of biological role, flagellin is the subunit protein which polymerizes to form the filaments of archaeal flagella. This Methanocaldococcus jannaschii (strain ATCC 43067 / DSM 2661 / JAL-1 / JCM 10045 / NBRC 100440) (Methanococcus jannaschii) protein is Flagellin B2 (flaB2).